The primary structure comprises 188 residues: Elongation factor P (188 aa).

It belongs to the elongation factor P family.

It localises to the cytoplasm. It functions in the pathway protein biosynthesis; polypeptide chain elongation. Involved in peptide bond synthesis. Stimulates efficient translation and peptide-bond synthesis on native or reconstituted 70S ribosomes in vitro. Probably functions indirectly by altering the affinity of the ribosome for aminoacyl-tRNA, thus increasing their reactivity as acceptors for peptidyl transferase. This chain is Elongation factor P, found in Rhodopseudomonas palustris (strain BisA53).